A 227-amino-acid polypeptide reads, in one-letter code: Basic leucine zipper 24 (227 aa).

A disordered region spans residues 44–68 (EDKDQDRVTRGCSHTHSCNPPGPED). One can recognise a bZIP domain in the interval 94–160 (DSSNKKRLCG…IRLRALLVEM (67 aa)). The tract at residues 98–118 (KKRLCGNREAVRKYREKKKAR) is basic motif. The interval 122–129 (LEDEVMRL) is leucine-zipper.

As to quaternary structure, homodimer. As to expression, expressed in young leaves and cauline leaves.

It localises to the nucleus. The protein resides in the cytoplasm. Transcription factor involved in the regulation of salt stress response. Functions as a negative transcriptional regulator of salt stress acclimation response by regulating cation homeostasis. Negatively regulates the expression of genes contributing to ion and osmotic homeostasis during salt stress, such as the Na(+) transporter HKT1, the Na(+)/H(+) antiporter SOS1, the aquaporin PIP2-1 and the glutamine synthetase GLN1-3. In addition, targets genes with functions in plant growth and development, such as argonaute 4 (AGO4) and cyclophilin 19 (CYP19). The protein is Basic leucine zipper 24 of Arabidopsis thaliana (Mouse-ear cress).